Reading from the N-terminus, the 344-residue chain is Lipase chaperone (344 aa).

A helical transmembrane segment spans residues 14–34 (VAVYGAVGLAAIAGVAIWSGA). The span at 45-57 (LSADAAARDGASA) shows a compositional bias: low complexity. Residues 45-78 (LSADAAARDGASAAPPPPARPASAGMPSPLAGSS) form a disordered region.

Belongs to the lipase chaperone family.

Its subcellular location is the cell inner membrane. In terms of biological role, may be involved in the folding of the extracellular lipase during its passage through the periplasm. This Burkholderia ambifaria (strain ATCC BAA-244 / DSM 16087 / CCUG 44356 / LMG 19182 / AMMD) (Burkholderia cepacia (strain AMMD)) protein is Lipase chaperone.